Consider the following 565-residue polypeptide: Periplasmic trehalase (565 aa).

Residues 1 to 30 form the signal peptide; it reads MKSPAPSRPQKMALIPACIFLCFAALSVQA. Substrate contacts are provided by residues Arg152, 159–160, Asn196, 205–207, 277–279, and Gly310; these read WD, RSQ, and RPE. Active-site proton donor/acceptor residues include Asp312 and Glu496. Residue Glu511 coordinates substrate. The segment at 539-565 is disordered; the sequence is CDNVPATRPLSESTTQPVKPKEAEPTL.

The protein belongs to the glycosyl hydrolase 37 family. Monomer.

It localises to the periplasm. It catalyses the reaction alpha,alpha-trehalose + H2O = alpha-D-glucose + beta-D-glucose. Functionally, provides the cells with the ability to utilize trehalose at high osmolarity by splitting it into glucose molecules that can subsequently be taken up by the phosphotransferase-mediated uptake system. The protein is Periplasmic trehalase of Shigella dysenteriae serotype 1 (strain Sd197).